The following is a 198-amino-acid chain: BPTI/Kunitz domain-containing protein 4 (198 aa).

An N-terminal signal peptide occupies residues 1-19; that stretch reads MNLLVFFVYLXVCVIGSHS. 4 consecutive Antistasin-like domains span residues 31–56, 56–85, 85–114, and 114–143; these read CGGA…ICKC, CRDA…TCEC, CKPL…TCFC, and CRPR…TCKC. The 51-residue stretch at 146-196 folds into the BPTI/Kunitz inhibitor domain; sequence CLEPKKVGPCRALIPRYFYDVWSGKCKKFYWGGCQANGNNFKRKSQCCKRC. 3 cysteine pairs are disulfide-bonded: cysteine 146/cysteine 196, cysteine 155/cysteine 179, and cysteine 171/cysteine 192.

Nacreous layer of shell (at protein level).

The protein resides in the secreted. This is BPTI/Kunitz domain-containing protein 4 from Margaritifera margaritifera (Freshwater pearl mussel).